Reading from the N-terminus, the 260-residue chain is Putative protein phosphatase 2C-like protein 44 (260 aa).

The PPM-type phosphatase domain occupies 41–259 (YYTVDRLSYA…SSISCVVIRF (219 aa)).

Belongs to the PP2C family.

The protein is Putative protein phosphatase 2C-like protein 44 of Arabidopsis thaliana (Mouse-ear cress).